A 261-amino-acid polypeptide reads, in one-letter code: Calbindin (261 aa).

The residue at position 2 (Ala2) is an N-acetylalanine. The interaction with RANBP9 stretch occupies residues 2-7 (AESHLQ). 5 consecutive EF-hand domains span residues 11–46 (ITAS…LQQA), 53–88 (ELSP…EENF), 98–133 (KSCE…LLEK), 142–177 (KLAE…QENF), and 186–221 (MCGK…LCEK). Asp24, Asp26, Ser28, Tyr30, and Glu35 together coordinate Ca(2+). Asp111, Asp113, Ser115, Glu122, Asp155, Asn157, Asp159, Lys161, Glu166, Asp199, Asp201, Asn203, Tyr205, and Glu210 together coordinate Ca(2+).

The protein belongs to the calbindin family. In terms of assembly, interacts with RANBP9.

Its function is as follows. Buffers cytosolic calcium. May stimulate a membrane Ca(2+)-ATPase and a 3',5'-cyclic nucleotide phosphodiesterase. This is Calbindin (CALB1) from Homo sapiens (Human).